The sequence spans 610 residues: Elongation factor 4 (610 aa).

A tr-type G domain is found at 13–195 (SHIRNFSIVA…AIVNRLPAPK (183 aa)). GTP contacts are provided by residues 25-30 (DHGKST) and 142-145 (NKID).

Belongs to the TRAFAC class translation factor GTPase superfamily. Classic translation factor GTPase family. LepA subfamily.

Its subcellular location is the cell inner membrane. It carries out the reaction GTP + H2O = GDP + phosphate + H(+). In terms of biological role, required for accurate and efficient protein synthesis under certain stress conditions. May act as a fidelity factor of the translation reaction, by catalyzing a one-codon backward translocation of tRNAs on improperly translocated ribosomes. Back-translocation proceeds from a post-translocation (POST) complex to a pre-translocation (PRE) complex, thus giving elongation factor G a second chance to translocate the tRNAs correctly. Binds to ribosomes in a GTP-dependent manner. In Rhizobium leguminosarum bv. trifolii (strain WSM2304), this protein is Elongation factor 4.